The following is a 422-amino-acid chain: Dihydroorotase (422 aa).

2 residues coordinate Zn(2+): His-59 and His-61. Substrate contacts are provided by residues 61 to 63 (HFR) and Asn-93. Residues Asp-150, His-177, and His-230 each contribute to the Zn(2+) site. Residue Asn-276 coordinates substrate. Asp-303 provides a ligand contact to Zn(2+). Asp-303 is a catalytic residue. Residue His-307 participates in substrate binding.

The protein belongs to the metallo-dependent hydrolases superfamily. DHOase family. Class I DHOase subfamily. The cofactor is Zn(2+).

The enzyme catalyses (S)-dihydroorotate + H2O = N-carbamoyl-L-aspartate + H(+). Its pathway is pyrimidine metabolism; UMP biosynthesis via de novo pathway; (S)-dihydroorotate from bicarbonate: step 3/3. Catalyzes the reversible cyclization of carbamoyl aspartate to dihydroorotate. The polypeptide is Dihydroorotase (Streptococcus pyogenes serotype M1).